Consider the following 3390-residue polypeptide: Genome polyprotein (3390 aa).

The interaction with host EXOC1 stretch occupies residues 1 to 15 (MNNQRKKTGKPSINM). The Cytoplasmic segment spans residues 1–100 (MNNQRKKTGK…MLSIINKRKK (100 aa)). The hydrophobic; homodimerization of capsid protein C stretch occupies residues 37–72 (LLNGQGPMKLVMAFIAFLRFLAIPPTAGVLARWGTF). Residues 101 to 114 (TSLCLMMMLPATLA) constitute a propeptide, ER anchor for the capsid protein C, removed in mature form by serine protease NS3. The chain crosses the membrane as a helical span at residues 101-118 (TSLCLMMMLPATLAFHLT). Over 119-243 (SRDGEPRMIV…VEKVETWALR (125 aa)) the chain is Extracellular. Asn183 is a glycosylation site (N-linked (GlcNAc...) asparagine; by host). The helical transmembrane segment at 244-264 (HPGFTILALFLAHYIGTSLTQ) threads the bilayer. A topological domain (cytoplasmic) is located at residue Lys265. Residues 266 to 280 (VVIFILLMLVTPSMT) traverse the membrane as a helical segment. The Extracellular portion of the chain corresponds to 281 to 723 (MRCVGVGNRD…VHQIFGSAYT (443 aa)). 4 cysteine pairs are disulfide-bonded: Cys283-Cys310, Cys340-Cys401, Cys354-Cys385, and Cys372-Cys396. The N-linked (GlcNAc...) asparagine; by host glycan is linked to Asn347. Residues 378 to 391 (DRGWGNGCGLFGKG) are fusion peptide. A glycan (N-linked (GlcNAc...) asparagine; by host) is linked at Asn433. Cystine bridges form between Cys463-Cys563 and Cys580-Cys611. A helical transmembrane segment spans residues 724-744 (ALFSGVSWIMKIGIGVLLTWI). The Cytoplasmic portion of the chain corresponds to 745 to 750 (GLNSKN). The helical transmembrane segment at 751 to 771 (TSMSFSCIAIGIITLYLGVVV) threads the bilayer. The Extracellular portion of the chain corresponds to 772–1193 (QADMGCVINW…MIGSNASDRM (422 aa)). Intrachain disulfides connect Cys777/Cys788, Cys828/Cys916, Cys952/Cys996, Cys1053/Cys1102, Cys1064/Cys1086, and Cys1085/Cys1089. N-linked (GlcNAc...) asparagine; by host glycans are attached at residues Asn903 and Asn980. 2 N-linked (GlcNAc...) asparagine; by host glycosylation sites follow: Asn1132 and Asn1188. Residues 1194 to 1218 (GMGVTYLALIATFKIQPFLALGFFL) traverse the membrane as a helical segment. The Cytoplasmic segment spans residues 1219-1224 (RKLTSR). The helical transmembrane segment at 1225-1243 (ENLLLGVGLAMAATLRLPE) threads the bilayer. Residues 1244–1267 (DIEQMANGIALGLMALKLITQFET) lie on the Lumenal side of the membrane. The helical transmembrane segment at 1268–1288 (YQLWTALVSLTCSNTIFTLTV) threads the bilayer. Ala1289 is a topological domain (cytoplasmic). Residues 1290-1308 (WRTATLILAGISLLPVCQS) traverse the membrane as a helical segment. The Lumenal portion of the chain corresponds to 1309 to 1315 (SSMRKTD). Residues 1316–1336 (WLPMTVAAMGVPPLPLFIFSL) form a helical membrane-spanning segment. The Cytoplasmic portion of the chain corresponds to 1337–1344 (KDTLKRRS). Residues 1345 to 1365 (WPLNEGVMAVGLVSILASSLL) form a helical membrane-spanning segment. The Lumenal portion of the chain corresponds to 1366-1368 (RND). The chain crosses the membrane as a helical span at residues 1369 to 1389 (VPMAGPLVAGGLLIACYVITG). Residues 1390 to 1443 (TSADLTVEKAADVTWEEEAEQTGVSHNLMITVDDDGTMRIKDDETENILTVLLK) are Cytoplasmic-facing. The tract at residues 1396–1435 (VEKAADVTWEEEAEQTGVSHNLMITVDDDGTMRIKDDETE) is interacts with and activates NS3 protease. Positions 1444–1464 (TALLIVSGIFPCSIPATLLVW) form an intramembrane region, helical. At 1465-2146 (HTWQKQTQRS…VEELPETMET (682 aa)) the chain is on the cytoplasmic side. The Peptidase S7 domain occupies 1474 to 1651 (SGVLWDVPSP…NAEPDGPTPE (178 aa)). Catalysis depends on charge relay system; for serine protease NS3 activity residues His1524, Asp1548, and Ser1608. One can recognise a Helicase ATP-binding domain in the interval 1654-1810 (EEMFKKRNLT…QSNAPIQDEE (157 aa)). Residues 1658-1661 (KKRN) form an important for RNA-binding region. 1667–1674 (LHPGSGKT) lines the ATP pocket. Residues 1758–1761 (DEAH) carry the DEAH box motif. Residues 1821–1986 (GNEWITDFVG…GIIPALFEPE (166 aa)) enclose the Helicase C-terminal domain. At Lys1862 the chain carries N6-acetyllysine; by host. A helical transmembrane segment spans residues 2147–2167 (LLLLGLMILLTGGAMLFLISG). Over 2168–2169 (KG) the chain is Lumenal. The segment at residues 2170 to 2190 (IGKTSIGLICVIASSGMLWMA) is an intramembrane region (helical). Position 2191 (Asp2191) is a topological domain, lumenal. The helical transmembrane segment at 2192–2212 (VPLQWIASAIVLEFFMMVLLI) threads the bilayer. The Cytoplasmic portion of the chain corresponds to 2213–2227 (PEPEKQRTPQDNQLA). The helical transmembrane segment at 2228-2248 (YVVIGILTLAAIVAANEMGLL) threads the bilayer. Topologically, residues 2249 to 2273 (ETTKRDLGMSKEPGVVSPTSYLDVD) are lumenal. An intramembrane region (helical) is located at residues 2274–2294 (LHPASAWTLYAVATTVITPML). Residues 2295–2305 (RHTIENSTANV) lie on the Lumenal side of the membrane. N-linked (GlcNAc...) asparagine; by host glycosylation is found at Asn2300 and Asn2304. Residues 2306–2326 (SLAAIANQAVVLMGLDKGWPI) constitute an intramembrane region (helical). Topologically, residues 2327–2346 (SKMDLGVPLLALGCYSQVNP) are lumenal. Residues 2347–2367 (LTLIAAVLLLVTHYAIIGPGL) form a helical membrane-spanning segment. At 2368–2412 (QAKATREAQKRTAAGIMKNPTVDGIMTIDLDPVIYDSKFEKQLGQ) the chain is on the cytoplasmic side. A helical transmembrane segment spans residues 2413 to 2433 (VMLLVLCAVQLLLMRTSWALC). The Lumenal segment spans residues 2434–2458 (EVLTLATGPITTLWEGSPGKFWNTT). An N-linked (GlcNAc...) asparagine; by host glycan is attached at Asn2456. The chain crosses the membrane as a helical span at residues 2459 to 2479 (IAVSMANIFRGSYLAGAGLAF). The Cytoplasmic segment spans residues 2480 to 3390 (SIMKSVGTGK…KEEESEGAIW (911 aa)). An mRNA cap 0-1 NS5-type MT domain is found at 2492–2753 (TGSQGETLGE…DVDLGAGTRH (262 aa)). Ser2546 serves as a coordination point for S-adenosyl-L-methionine. Phosphoserine is present on Ser2546. The active-site For 2'-O-MTase activity is Lys2551. Residues 2567–2570 (VIDL) carry the SUMO-interacting motif motif. S-adenosyl-L-methionine is bound by residues Gly2576, Trp2577, Thr2594, Lys2595, Asp2621, and Val2622. Residue Asp2636 is the For 2'-O-MTase activity of the active site. S-adenosyl-L-methionine is bound at residue Ile2637. Active-site for 2'-O-MTase activity residues include Lys2670 and Glu2706. Tyr2708 lines the S-adenosyl-L-methionine pocket. 4 residues coordinate Zn(2+): Glu2927, His2931, Cys2936, and Cys2939. The 151-residue stretch at 3018 to 3168 (AMYADDTAGW…PIDDRFANAL (151 aa)) folds into the RdRp catalytic domain. The Zn(2+) site is built by His3202, Cys3218, and Cys3337.

In the N-terminal section; belongs to the class I-like SAM-binding methyltransferase superfamily. mRNA cap 0-1 NS5-type methyltransferase family. In terms of assembly, homodimer. Interacts (via N-terminus) with host EXOC1 (via C-terminus); this interaction results in EXOC1 degradation through the proteasome degradation pathway. Forms heterodimers with envelope protein E in the endoplasmic reticulum and Golgi. As to quaternary structure, homodimer; in the endoplasmic reticulum and Golgi. Interacts with protein prM. Interacts with non-structural protein 1. In terms of assembly, homodimer; Homohexamer when secreted. Interacts with envelope protein E. Interacts (via N-terminus) with serine protease NS3. As to quaternary structure, forms a heterodimer with serine protease NS3. May form homooligomers. In terms of assembly, forms a heterodimer with NS2B. Interacts with NS4B. Interacts with unphosphorylated RNA-directed RNA polymerase NS5; this interaction stimulates RNA-directed RNA polymerase NS5 guanylyltransferase activity. Interacts with host MAVS; this interaction inhibits the synthesis of IFN-beta. Interacts with host AUP1; the interaction occurs in the presence of Dengue virus NS4B and induces lipophagy which facilitates production of virus progeny particles. As to quaternary structure, interacts with serine protease NS3. In terms of assembly, homodimer. Interacts with host STAT2; this interaction inhibits the phosphorylation of the latter, and, when all viral proteins are present (polyprotein), targets STAT2 for degradation. Interacts with serine protease NS3. Post-translationally, specific enzymatic cleavages in vivo yield mature proteins. Cleavages in the lumen of endoplasmic reticulum are performed by host signal peptidase, whereas cleavages in the cytoplasmic side are performed by serine protease NS3. Signal cleavage at the 2K-4B site requires a prior NS3 protease-mediated cleavage at the 4A-2K site. In terms of processing, cleaved in post-Golgi vesicles by a host furin, releasing the mature small envelope protein M, and peptide pr. This cleavage is incomplete as up to 30% of viral particles still carry uncleaved prM. N-glycosylated. Post-translationally, N-glycosylated. The excreted form is glycosylated and this is required for efficient secretion of the protein from infected cells. In terms of processing, acetylated by host KAT5. Acetylation modulates NS3 RNA-binding and unwinding activities and plays an important positive role for viral replication. Sumoylation of RNA-directed RNA polymerase NS5 increases NS5 protein stability allowing proper viral RNA replication. Post-translationally, phosphorylated on serines residues. This phosphorylation may trigger NS5 nuclear localization.

The protein localises to the virion. Its subcellular location is the host nucleus. It localises to the host cytoplasm. It is found in the host perinuclear region. The protein resides in the secreted. The protein localises to the virion membrane. Its subcellular location is the host endoplasmic reticulum membrane. It localises to the host mitochondrion. It catalyses the reaction Selective hydrolysis of -Xaa-Xaa-|-Yaa- bonds in which each of the Xaa can be either Arg or Lys and Yaa can be either Ser or Ala.. The catalysed reaction is RNA(n) + a ribonucleoside 5'-triphosphate = RNA(n+1) + diphosphate. It carries out the reaction a ribonucleoside 5'-triphosphate + H2O = a ribonucleoside 5'-diphosphate + phosphate + H(+). The enzyme catalyses ATP + H2O = ADP + phosphate + H(+). It catalyses the reaction a 5'-end (5'-triphosphoguanosine)-ribonucleoside in mRNA + S-adenosyl-L-methionine = a 5'-end (N(7)-methyl 5'-triphosphoguanosine)-ribonucleoside in mRNA + S-adenosyl-L-homocysteine. The catalysed reaction is a 5'-end (N(7)-methyl 5'-triphosphoguanosine)-ribonucleoside in mRNA + S-adenosyl-L-methionine = a 5'-end (N(7)-methyl 5'-triphosphoguanosine)-(2'-O-methyl-ribonucleoside) in mRNA + S-adenosyl-L-homocysteine + H(+). Plays a role in virus budding by binding to the cell membrane and gathering the viral RNA into a nucleocapsid that forms the core of a mature virus particle. During virus entry, may induce genome penetration into the host cytoplasm after hemifusion induced by the surface proteins. Can migrate to the cell nucleus where it modulates host functions. Overcomes the anti-viral effects of host EXOC1 by sequestering and degrading the latter through the proteasome degradation pathway. Functionally, inhibits RNA silencing by interfering with host Dicer. In terms of biological role, prevents premature fusion activity of envelope proteins in trans-Golgi by binding to envelope protein E at pH6.0. After virion release in extracellular space, gets dissociated from E dimers. Its function is as follows. Acts as a chaperone for envelope protein E during intracellular virion assembly by masking and inactivating envelope protein E fusion peptide. prM is the only viral peptide matured by host furin in the trans-Golgi network probably to avoid catastrophic activation of the viral fusion activity in acidic Golgi compartment prior to virion release. prM-E cleavage is inefficient, and many virions are only partially matured. These uncleaved prM would play a role in immune evasion. May play a role in virus budding. Exerts cytotoxic effects by activating a mitochondrial apoptotic pathway through M ectodomain. May display a viroporin activity. Functionally, binds to host cell surface receptor and mediates fusion between viral and cellular membranes. Envelope protein is synthesized in the endoplasmic reticulum in the form of heterodimer with protein prM. They play a role in virion budding in the ER, and the newly formed immature particle is covered with 60 spikes composed of heterodimer between precursor prM and envelope protein E. The virion is transported to the Golgi apparatus where the low pH causes dissociation of PrM-E heterodimers and formation of E homodimers. prM-E cleavage is inefficient, and many virions are only partially matured. These uncleaved prM would play a role in immune evasion. In terms of biological role, involved in immune evasion, pathogenesis and viral replication. Once cleaved off the polyprotein, is targeted to three destinations: the viral replication cycle, the plasma membrane and the extracellular compartment. Essential for viral replication. Required for formation of the replication complex and recruitment of other non-structural proteins to the ER-derived membrane structures. Excreted as a hexameric lipoparticle that plays a role against host immune response. Antagonizing the complement function. Binds to the host macrophages and dendritic cells. Inhibits signal transduction originating from Toll-like receptor 3 (TLR3). Its function is as follows. Disrupts the host endothelial glycocalyx layer of host pulmonary microvascular endothelial cells, inducing degradation of sialic acid and shedding of heparan sulfate proteoglycans. NS1 induces expression of sialidases, heparanase, and activates cathepsin L, which activates heparanase via enzymatic cleavage. These effects are probably linked to the endothelial hyperpermeability observed in severe dengue disease. Component of the viral RNA replication complex that functions in virion assembly and antagonizes the host immune response. Functionally, required cofactor for the serine protease function of NS3. May have membrane-destabilizing activity and form viroporins. In terms of biological role, displays three enzymatic activities: serine protease, NTPase and RNA helicase. NS3 serine protease, in association with NS2B, performs its autocleavage and cleaves the polyprotein at dibasic sites in the cytoplasm: C-prM, NS2A-NS2B, NS2B-NS3, NS3-NS4A, NS4A-2K and NS4B-NS5. NS3 RNA helicase binds RNA and unwinds dsRNA in the 3' to 5' direction. Its function is as follows. Regulates the ATPase activity of the NS3 helicase activity. NS4A allows NS3 helicase to conserve energy during unwinding. Plays a role in the inhibition of the host innate immune response. Interacts with host MAVS and thereby prevents the interaction between RIGI and MAVS. In turn, IFN-beta production is impaired. Interacts with host AUP1 which mediates induction of lipophagy in host cells and facilitates production of virus progeny particles. Functions as a signal peptide for NS4B and is required for the interferon antagonism activity of the latter. Functionally, induces the formation of ER-derived membrane vesicles where the viral replication takes place. Inhibits interferon (IFN)-induced host STAT1 phosphorylation and nuclear translocation, thereby preventing the establishment of cellular antiviral state by blocking the IFN-alpha/beta pathway. In terms of biological role, replicates the viral (+) and (-) RNA genome, and performs the capping of genomes in the cytoplasm. NS5 methylates viral RNA cap at guanine N-7 and ribose 2'-O positions. Besides its role in RNA genome replication, also prevents the establishment of cellular antiviral state by blocking the interferon-alpha/beta (IFN-alpha/beta) signaling pathway. Inhibits host TYK2 and STAT2 phosphorylation, thereby preventing activation of JAK-STAT signaling pathway. The sequence is that of Genome polyprotein from Dengue virus type 3 (strain China/80-2/1980) (DENV-3).